Here is a 626-residue protein sequence, read N- to C-terminus: Chaperone protein HtpG (626 aa).

Positions 1 to 341 are a; substrate-binding; the sequence is METKQFKAES…SEDLSLNISR (341 aa). Residues 342–552 are b; it reads EMLQHDRQLK…EGEISIEMEK (211 aa). The tract at residues 553 to 626 is c; that stretch reads ILSAMPNNEN…FSNSICKLMI (74 aa).

It belongs to the heat shock protein 90 family. In terms of assembly, homodimer.

The protein localises to the cytoplasm. Functionally, molecular chaperone. Has ATPase activity. The sequence is that of Chaperone protein HtpG from Alkaliphilus oremlandii (strain OhILAs) (Clostridium oremlandii (strain OhILAs)).